We begin with the raw amino-acid sequence, 305 residues long: UDP-3-O-acyl-N-acetylglucosamine deacetylase (305 aa).

Zn(2+) contacts are provided by histidine 79, histidine 238, and aspartate 242. Histidine 265 serves as the catalytic Proton donor.

Belongs to the LpxC family. It depends on Zn(2+) as a cofactor.

It carries out the reaction a UDP-3-O-[(3R)-3-hydroxyacyl]-N-acetyl-alpha-D-glucosamine + H2O = a UDP-3-O-[(3R)-3-hydroxyacyl]-alpha-D-glucosamine + acetate. Its pathway is glycolipid biosynthesis; lipid IV(A) biosynthesis; lipid IV(A) from (3R)-3-hydroxytetradecanoyl-[acyl-carrier-protein] and UDP-N-acetyl-alpha-D-glucosamine: step 2/6. Functionally, catalyzes the hydrolysis of UDP-3-O-myristoyl-N-acetylglucosamine to form UDP-3-O-myristoylglucosamine and acetate, the committed step in lipid A biosynthesis. The chain is UDP-3-O-acyl-N-acetylglucosamine deacetylase from Enterobacter sp. (strain 638).